We begin with the raw amino-acid sequence, 340 residues long: Guanine nucleotide-binding protein G(I)/G(S)/G(T) subunit beta-3 (340 aa).

WD repeat units lie at residues 53–83, 95–125, 141–170, 182–212, 224–254, 268–298, and 310–340; these read GHLA…IVWD, LRSS…SIYN, AHTG…ALWD, GHTG…KLWD, GHES…RLFD, SIIC…NVWD, and GHDN…KIWN.

The protein belongs to the WD repeat G protein beta family. G proteins are composed of 3 units, alpha, beta and gamma. Interacts with RASD2.

Guanine nucleotide-binding proteins (G proteins) are involved as a modulator or transducer in various transmembrane signaling systems. The beta and gamma chains are required for the GTPase activity, for replacement of GDP by GTP, and for G protein-effector interaction. This is Guanine nucleotide-binding protein G(I)/G(S)/G(T) subunit beta-3 (Gnb3) from Mus musculus (Mouse).